Reading from the N-terminus, the 130-residue chain is Small ribosomal subunit protein uS11 (130 aa).

Belongs to the universal ribosomal protein uS11 family. As to quaternary structure, part of the 30S ribosomal subunit. Interacts with proteins S7 and S18. Binds to IF-3.

Its function is as follows. Located on the platform of the 30S subunit, it bridges several disparate RNA helices of the 16S rRNA. Forms part of the Shine-Dalgarno cleft in the 70S ribosome. In Moorella thermoacetica (strain ATCC 39073 / JCM 9320), this protein is Small ribosomal subunit protein uS11.